An 822-amino-acid polypeptide reads, in one-letter code: DNA-directed RNA polymerase subunit beta N-terminal section (822 aa).

Residues 376–408 (ELTEGNPSSKSQTKNKTSASKKSKTLNVANTKG) form a disordered region. Positions 383 to 393 (SSKSQTKNKTS) are enriched in low complexity.

This sequence belongs to the RNA polymerase beta chain family. As to quaternary structure, in plastids the minimal PEP RNA polymerase catalytic core is composed of four subunits: alpha, beta, beta', and beta''. When a (nuclear-encoded) sigma factor is associated with the core the holoenzyme is formed, which can initiate transcription.

It is found in the plastid. Its subcellular location is the chloroplast. The catalysed reaction is RNA(n) + a ribonucleoside 5'-triphosphate = RNA(n+1) + diphosphate. In terms of biological role, DNA-dependent RNA polymerase catalyzes the transcription of DNA into RNA using the four ribonucleoside triphosphates as substrates. In Chlamydomonas reinhardtii (Chlamydomonas smithii), this protein is DNA-directed RNA polymerase subunit beta N-terminal section (rpoB1).